Consider the following 508-residue polypeptide: Probable polyol transporter 3 (508 aa).

12 consecutive transmembrane segments (helical) span residues 21–41 (FAFGCAIVASIISIIFGYDTG), 60–80 (QIEVLAGILNLCALVGSLTAG), 90–110 (YTIALSAVIFLVGSVLMGYGP), 120–140 (CIAGVGVGFALMIAPVYSAEI), 147–167 (GFLTSLPELCISLGILLGYVS), 178–198 (LGWRLMLGIAAFPSLILAFGI), 280–300 (ILIAAVGIHFFEHATGIEAVV), 318–338 (LLLATVGVGLTKAFFIIIATF), 348–368 (LLLTSTGGMVFALTSLAVSLT), 384–404 (IVSTYAFVAFFSIGLGPITWV), 418–438 (GASIGVAVNRIMNATVSMSFL), and 448–468 (GVFFVFAGIAVAAWWFFFFML).

This sequence belongs to the major facilitator superfamily. Sugar transporter (TC 2.A.1.1) family.

The protein resides in the membrane. In terms of biological role, plasma membrane sugar-proton symporter. The sequence is that of Probable polyol transporter 3 (PLT3) from Arabidopsis thaliana (Mouse-ear cress).